A 235-amino-acid polypeptide reads, in one-letter code: Myelin protein zero-like protein 3 (235 aa).

Positions 1 to 31 (MQQRGAAGSRGCALFPLLGVLFFQGVYIVFS) are cleaved as a signal peptide. Residues 32–148 (LEIRADAHVR…NIPMTELTVT (117 aa)) enclose the Ig-like V-type domain. Over 32 to 158 (LEIRADAHVR…ERGFGTMLSS (127 aa)) the chain is Extracellular. A disulfide bond links C52 and C128. A glycan (N-linked (GlcNAc...) asparagine) is linked at N123. Residues 159–179 (VALLSILVFVPSAVVVALLLV) form a helical membrane-spanning segment. Residues 180–235 (RMGRKAAGLKKRSRSGYKKSSIEVSDDTDQEEEEACMARLCVRCAECLDSDYEETY) lie on the Cytoplasmic side of the membrane.

It belongs to the myelin P0 protein family.

The protein localises to the membrane. In terms of biological role, mediates homophilic cell-cell adhesion. This chain is Myelin protein zero-like protein 3 (MPZL3), found in Homo sapiens (Human).